Consider the following 123-residue polypeptide: ATP synthase epsilon chain (123 aa).

This sequence belongs to the ATPase epsilon chain family. As to quaternary structure, F-type ATPases have 2 components, CF(1) - the catalytic core - and CF(0) - the membrane proton channel. CF(1) has five subunits: alpha(3), beta(3), gamma(1), delta(1), epsilon(1). CF(0) has three main subunits: a, b and c.

It localises to the cell inner membrane. Produces ATP from ADP in the presence of a proton gradient across the membrane. The sequence is that of ATP synthase epsilon chain from Helicobacter pylori (strain HPAG1).